A 253-amino-acid polypeptide reads, in one-letter code: Ribosomal RNA small subunit methyltransferase A (253 aa).

Positions 12, 14, 39, 60, 81, and 104 each coordinate S-adenosyl-L-methionine.

This sequence belongs to the class I-like SAM-binding methyltransferase superfamily. rRNA adenine N(6)-methyltransferase family. RsmA subfamily.

Its subcellular location is the cytoplasm. It carries out the reaction adenosine(1518)/adenosine(1519) in 16S rRNA + 4 S-adenosyl-L-methionine = N(6)-dimethyladenosine(1518)/N(6)-dimethyladenosine(1519) in 16S rRNA + 4 S-adenosyl-L-homocysteine + 4 H(+). Specifically dimethylates two adjacent adenosines (A1518 and A1519) in the loop of a conserved hairpin near the 3'-end of 16S rRNA in the 30S particle. May play a critical role in biogenesis of 30S subunits. In Paracidovorax citrulli (strain AAC00-1) (Acidovorax citrulli), this protein is Ribosomal RNA small subunit methyltransferase A.